Consider the following 1035-residue polypeptide: FERM domain-containing protein 4B (1035 aa).

Residues 59 to 361 (RHCQVHLLDD…SQHQFYLDRK (303 aa)) enclose the FERM domain. Ser372 carries the post-translational modification Phosphoserine. 2 coiled-coil regions span residues 414–451 (QDSE…LKKI) and 535–559 (KQDY…RIRC). The necessary for adherens junction and tight junction localization stretch occupies residues 542–972 (VKRLQEIENS…TQLTIGLSEY (431 aa)). Disordered stretches follow at residues 563 to 615 (PSQK…ILPP), 631 to 699 (NEQF…LESQ), 713 to 738 (FTLS…SQSS), and 754 to 798 (TQTL…SKGQ). Residues 571-590 (PPEDIIPSESSSLSDTTTYD) show a composition bias toward low complexity. The span at 594-607 (DSFTLAGQRPSSVP) shows a compositional bias: polar residues. Ser609 carries the phosphoserine modification. Positions 635–644 (MDTRHSREML) are enriched in basic and acidic residues. 2 stretches are compositionally biased toward polar residues: residues 664–699 (MPTT…LESQ) and 715–725 (LSKSQRSSSTE). At Ser698 the chain carries Phosphoserine. Basic residues predominate over residues 762-771 (RGRRRSKKHS). Residues 772–782 (VSTSNSGSMPN) show a composition bias toward polar residues. A Glycyl lysine isopeptide (Lys-Gly) (interchain with G-Cter in SUMO2) cross-link involves residue Lys883. 3 disordered regions span residues 906 to 926 (RASG…SDRG), 939 to 958 (PCSP…TNAS), and 994 to 1035 (PSRQ…GTLV). The segment covering 907 to 921 (ASGQKDQGHSPQTSF) has biased composition (polar residues). Ser916 carries the post-translational modification Phosphoserine. Positions 941-958 (SPSSRASSYSSVSSTNAS) are enriched in low complexity. The segment covering 1019-1035 (SEQRLFWHEDSKPGTLV) has biased composition (basic and acidic residues). Lys1030 is covalently cross-linked (Glycyl lysine isopeptide (Lys-Gly) (interchain with G-Cter in SUMO2)).

Interacts with CYTH3. Interacts with PARD3. Interacts with CYTH1. In terms of tissue distribution, isoform 1 is expressed in the brain. Isoform 2 is expressed in the lung (at protein level).

It is found in the cytoplasm. Its subcellular location is the cytoskeleton. The protein localises to the cell junction. It localises to the tight junction. The protein resides in the adherens junction. Member of GRP1 signaling complexes that are acutely recruited to plasma membrane ruffles in response to insulin receptor signaling. May function as a scaffolding protein that regulates epithelial cell polarity by connecting ARF6 activation with the PAR3 complex. Plays a redundant role with FRMD4A in epithelial polarization. This chain is FERM domain-containing protein 4B (Frmd4b), found in Mus musculus (Mouse).